The chain runs to 1067 residues: Myocardin-related transcription factor B (1067 aa).

RPEL repeat units follow at residues 46–71, 90–115, and 134–159; these read EVLQ…PPLK, NFLK…EETL, and DDLN…PVDL. Disordered regions lie at residues 175–223 and 249–286; these read NLDT…NTTI and PLSC…PRVK. 2 stretches are compositionally biased toward polar residues: residues 193 to 203 and 212 to 223; these read QPASQESQGSA and SDSSSPVSNTTI. Basic and acidic residues predominate over residues 268-283; sequence KHTEKPRSKKSKDPKP. Positions 390–424 constitute an SAP domain; sequence LDDMKVAELKMELKLRGLPVSGTKMDLIERLKPFQ. Positions 540-594 form a coiled coil; the sequence is GNTPNVELDAVEKDRKLQEKEKQIEELKRKLEQEQKLVEVLKKQLELEKRGQQQQ. Residues 799 to 819 show a composition bias toward polar residues; it reads ISTSAQPQRSTQLTAVQNGPT. The segment at 799–829 is disordered; that stretch reads ISTSAQPQRSTQLTAVQNGPTSLHEKSSTPP.

In terms of assembly, interacts with SRF.

Its subcellular location is the nucleus. In terms of biological role, poor transcriptional factor which uses the canonical single or multiple CArG boxes DNA sequence. Acts as a cofactor of serum response factor (SRF) with the potential to modulate SRF target genes. The polypeptide is Myocardin-related transcription factor B (mrtfb) (Xenopus laevis (African clawed frog)).